Reading from the N-terminus, the 828-residue chain is Protein SEY1 homolog (828 aa).

Over 1–718 (MTEDVMNDDF…SSKNGISWKN (718 aa)) the chain is Cytoplasmic. The 241-residue stretch at 44-284 (GFNYNVLSIL…VPSDGFFYYA (241 aa)) folds into the GB1/RHD3-type G domain. Residue 54 to 61 (GCQSSGKS) participates in GTP binding. The helical transmembrane segment at 719–739 (IPPPFWILLLLCSWNELCSVL) threads the bilayer. Topologically, residues 740–742 (RIV) are lumenal. A helical membrane pass occupies residues 743-763 (FKVQVLIPLIILGFIVVQYFS). At 764–828 (HLVFGTSADA…NDSGKKAEEN (65 aa)) the chain is on the cytoplasmic side.

The protein belongs to the TRAFAC class dynamin-like GTPase superfamily. GB1/RHD3 GTPase family. RHD3 subfamily.

The protein localises to the endoplasmic reticulum membrane. Probable GTP-binding protein that may be involved in cell development. The protein is Protein SEY1 homolog of Babesia bovis.